The primary structure comprises 311 residues: Putative F-box protein At3g28280 (311 aa).

The 43-residue stretch at 1–43 folds into the F-box domain; it reads MNSLPEDLLAMILVKLPIKIFTTFKIVCTQWESMVDSPYFRDL.

The polypeptide is Putative F-box protein At3g28280 (Arabidopsis thaliana (Mouse-ear cress)).